The chain runs to 183 residues: D-glycero-alpha-D-manno-heptose-1,7-bisphosphate 7-phosphatase (183 aa).

4 residues coordinate Zn(2+): Cys93, His95, Cys108, and Cys110.

It belongs to the GmhB family.

It is found in the cytoplasm. The enzyme catalyses D-glycero-alpha-D-manno-heptose 1,7-bisphosphate + H2O = D-glycero-alpha-D-manno-heptose 1-phosphate + phosphate. It functions in the pathway nucleotide-sugar biosynthesis; GDP-D-glycero-alpha-D-manno-heptose biosynthesis; GDP-D-glycero-alpha-D-manno-heptose from D-glycero-alpha-D-manno-heptose 7-phosphate: step 2/3. Its function is as follows. Converts the D-glycero-alpha-D-manno-heptose 1,7-bisphosphate intermediate into D-glycero-alpha-D-manno-heptose 1-phosphate by removing the phosphate group at the C-7 position. The sequence is that of D-glycero-alpha-D-manno-heptose-1,7-bisphosphate 7-phosphatase (gmhB2) from Photorhabdus laumondii subsp. laumondii (strain DSM 15139 / CIP 105565 / TT01) (Photorhabdus luminescens subsp. laumondii).